The following is a 145-amino-acid chain: MLNPSRFRILAIGKVRKSWIQNGLEVYRKRLPGLSITEIRDGDIKKESRAIISSIKKDELLIALCEEGEKFTSMDFSHWLQNLGSSRIVFAIGGTNGLSQEVKTSADLCISLSALTFPHEMARLILAEQLYRAISIAKGSPYHRE.

S-adenosyl-L-methionine is bound by residues Leu-64, Gly-93, and 112–117 (LSALTF).

This sequence belongs to the RNA methyltransferase RlmH family. In terms of assembly, homodimer.

The protein resides in the cytoplasm. It catalyses the reaction pseudouridine(1915) in 23S rRNA + S-adenosyl-L-methionine = N(3)-methylpseudouridine(1915) in 23S rRNA + S-adenosyl-L-homocysteine + H(+). Specifically methylates the pseudouridine at position 1915 (m3Psi1915) in 23S rRNA. The sequence is that of Ribosomal RNA large subunit methyltransferase H from Prochlorococcus marinus (strain SARG / CCMP1375 / SS120).